A 582-amino-acid chain; its full sequence is Histone deacetylase 9-B (582 aa).

Residues 146–195 form an interaction with mef2 region; the sequence is SNEVKQKLQEFLLSKSTKDITLNGIPQKITQSSKLWYTASHHTSLEQSSP. Polar residues predominate over residues 189–205; it reads SLEQSSPPLGGASSSCK. Disordered regions lie at residues 189 to 254, 270 to 314, 409 to 447, and 496 to 567; these read SLEQ…KEGN, TASS…QSRL, LSSGQSPVHPPSPLAMMENSPSSTRPKLPRHRPLNRTQS, and VHLQ…NQSS. 2 stretches are compositionally biased toward basic and acidic residues: residues 213-224 and 238-253; these read DYRDDFPLRKTV and KVAERRSSPLLRRKEG. Residues 270-289 are compositionally biased toward low complexity; that stretch reads TASSSAPGSGPSSPNGACSA. A compositionally biased stretch (polar residues) spans 295–314; it reads GPSSLPVTTRTERWPSQSRL.

It belongs to the histone deacetylase family. HD type 2 subfamily. In terms of assembly, homodimer. Interacts with mef2.

Its subcellular location is the nucleus. The enzyme catalyses N(6)-acetyl-L-lysyl-[histone] + H2O = L-lysyl-[histone] + acetate. Its function is as follows. Devoided of intrinsic deacetylase activity, promotes the deacetylation of lysine residues on the N-terminal part of the core histones (H2A, H2B, H3 and H4) by recruiting other histone deacetylases. Histone deacetylation gives a tag for epigenetic repression and plays an important role in transcriptional regulation, cell cycle progression and developmental events. Represses MEF2-dependent transcription. The protein is Histone deacetylase 9-B (hdac9b) of Danio rerio (Zebrafish).